We begin with the raw amino-acid sequence, 302 residues long: MMAVAAATRIAVVVVAALAALAPGARGLRRDDFPVGFLFGAATSAYQVGWSIMGCSHGGWVWSLPFLVDPGRISDRRNGDVADDHYHRYTEDVEILHNLGVNSYRFSISWARILPSRFGGVNSAGIAFYNRLIDALLQKGIQPFVTLNHFDIPQELEIRYGGWLGAGIREEFGYYSDVCFKAFGDRVRFWTTFNEPNLITKFQFMLGAYPPNRCSPPFGSCNSGDSRREPYTAAHNILLSHAAAVHNYKTNYQAKQGGSIGIVVAMKWYEPLTNSTEDVRAARRALAFEVDWYGFACYLPFL.

A signal peptide spans 1–27 (MMAVAAATRIAVVVVAALAALAPGARG). Residues Gln-47, His-149, and 194-195 (NE) contribute to the a beta-D-glucoside site. Catalysis depends on Glu-195, which acts as the Proton donor. Cys-214 and Cys-221 are disulfide-bonded. An N-linked (GlcNAc...) asparagine glycan is attached at Asn-274.

Belongs to the glycosyl hydrolase 1 family.

It carries out the reaction Hydrolysis of terminal, non-reducing beta-D-glucosyl residues with release of beta-D-glucose.. The chain is Putative beta-glucosidase 17 (BGLU17) from Oryza sativa subsp. japonica (Rice).